The primary structure comprises 354 residues: DnaJ homolog shv (354 aa).

An N-terminal signal peptide occupies residues 1 to 22 (MQLIKCLVIIQLSLLLVEESFA). The J domain maps to 25 to 90 (DFYKILNVKK…DKRKTYDRCG (66 aa)). N-linked (GlcNAc...) asparagine glycans are attached at residues asparagine 260 and asparagine 312.

In the testes, detected at low levels in somatic hub cells, cyst stem cells and the apical tip (at protein level). Levels in the testes decrease with age (at protein level). Expressed at low levels in hub cells, cyst stem cells and germline stem cells, and at high levels in spermatocytes and cyst cells.

Its subcellular location is the nucleus. The protein localises to the cell membrane. The protein resides in the secreted. Functionally, maintains stem cell niche architecture in the testes. Activates an extracellular integrin beta-PS pathway which regulates DE-cadherin (shg) levels in somatic hub cells, and is essential for maintaining the number of germline stem cells and the structure and localization of hub cells. In Drosophila melanogaster (Fruit fly), this protein is DnaJ homolog shv.